The following is a 223-amino-acid chain: Matrix protein (223 aa).

Over residues 1–10 the composition is skewed to basic residues; the sequence is MLTLFKKGKP. Residues 1-23 form a disordered region; the sequence is MLTLFKKGKPKGGSVDDRNSSYR. Positions 14–23 are enriched in basic and acidic residues; that stretch reads SVDDRNSSYR.

In terms of assembly, homomultimer. Interacts with nucleoprotein and with the cytoplasmic domain of glycoprotein.

The protein localises to the virion membrane. It is found in the host endomembrane system. Plays a major role in assembly and budding of virion. Completely covers the ribonucleoprotein coil and keep it in condensed bullet-shaped form. Inhibits viral transcription and stimulates replication. This Bos taurus (Bovine) protein is Matrix protein (M).